Reading from the N-terminus, the 142-residue chain is Transcription antitermination protein NusB (142 aa).

This sequence belongs to the NusB family.

Functionally, involved in transcription antitermination. Required for transcription of ribosomal RNA (rRNA) genes. Binds specifically to the boxA antiterminator sequence of the ribosomal RNA (rrn) operons. This Roseiflexus castenholzii (strain DSM 13941 / HLO8) protein is Transcription antitermination protein NusB.